The primary structure comprises 340 residues: MNTVLFSPYTTRGLTLKNRIVMSPMCMYSCDTKDGTVRTWHKIHYPARAIGQVGLIIVEATGVTPQGRISEHDLGIWDDDHIHGLHELVGLVKEHGAAIGIQLAHAGRKSEVPGEIIAPSAIPFNESSPTPKEMTKADIEKTVQAFQDGARRAKKAGFDVIEIHAAHGYLINEFLSPLSNRRQDEYGGSPENRYHFLGEVIDAVREVWDGPLFVRISASDYHPDGLTVKDYVPYVKRMKEQGVDLVDVSSGAVVPARIDVYPGYQVPFAEFIRREAGIPTGAVGLITSGWQAEEVLHNGRADLVFLGRELLRNPYWPYAAAKELGVKIEAPVQYERGWRF.

23-26 (SPMC) lines the FMN pocket. Y28 contacts substrate. Residues A60 and Q102 each contribute to the FMN site. 164-167 (HAAH) contributes to the substrate binding site. FMN-binding positions include R215 and 307-308 (GR).

The protein belongs to the NADH:flavin oxidoreductase/NADH oxidase family. NamA subfamily. In terms of assembly, homotetramer. Requires FMN as cofactor.

It carries out the reaction A + NADPH + H(+) = AH2 + NADP(+). Its function is as follows. Catalyzes the reduction of the double bond of an array of alpha,beta-unsaturated aldehydes and ketones. It also reduces the nitro group of nitroester and nitroaromatic compounds. It could have a role in detoxification processes. The chain is NADPH dehydrogenase from Geobacillus thermodenitrificans (strain NG80-2).